We begin with the raw amino-acid sequence, 111 residues long: Large ribosomal subunit protein P1 (111 aa).

Positions 75-111 are disordered; sequence AAAPAAEEKAEEEKKEEEEEKKEEEVDLSGLSGMFGF. The span at 88–101 shows a compositional bias: acidic residues; it reads KKEEEEEKKEEEVD.

Belongs to the eukaryotic ribosomal protein P1/P2 family. Part of the 50S ribosomal subunit. Homodimer, it forms part of the ribosomal stalk which helps the ribosome interact with GTP-bound translation factors. Forms a heptameric uL10/P0(P1)2(P1)2(P1)2 complex, where uL10/P0 forms an elongated spine to which the P1 dimers bind in a sequential fashion.

Functionally, forms part of the ribosomal stalk, playing a central role in the interaction of the ribosome with GTP-bound translation factors. The polypeptide is Large ribosomal subunit protein P1 (Aeropyrum pernix (strain ATCC 700893 / DSM 11879 / JCM 9820 / NBRC 100138 / K1)).